Consider the following 361-residue polypeptide: Cytochrome c peroxidase, mitochondrial (361 aa).

Residues 1–41 (MASAARSASRAFLRSSLRPAVRSSRFALPTQGLRVASRRGY) constitute a mitochondrion transit peptide. The active-site Proton acceptor is the His122. Residue His245 coordinates heme b. Trp261 serves as the catalytic Tryptophan radical intermediate.

This sequence belongs to the peroxidase family. Cytochrome c peroxidase subfamily. In terms of assembly, forms a one-to-one complex with cytochrome c. Heme b serves as cofactor.

The protein resides in the mitochondrion matrix. The protein localises to the mitochondrion intermembrane space. It catalyses the reaction 2 Fe(II)-[cytochrome c] + H2O2 + 2 H(+) = 2 Fe(III)-[cytochrome c] + 2 H2O. Destroys radicals which are normally produced within the cells and which are toxic to biological systems. The protein is Cytochrome c peroxidase, mitochondrial (ccp1) of Emericella nidulans (strain FGSC A4 / ATCC 38163 / CBS 112.46 / NRRL 194 / M139) (Aspergillus nidulans).